A 192-amino-acid chain; its full sequence is Probable GTP-binding protein EngB (192 aa).

In terms of domain architecture, EngB-type G spans 22–192 (QIPEIVFAGR…LLAHLAQYIR (171 aa)). Residues 30 to 37 (GRSNVGKS), 57 to 61 (GKTRL), 75 to 78 (DLPG), 142 to 145 (TKDD), and 172 to 174 (YSS) contribute to the GTP site. Mg(2+) is bound by residues S37 and T59.

The protein belongs to the TRAFAC class TrmE-Era-EngA-EngB-Septin-like GTPase superfamily. EngB GTPase family. Requires Mg(2+) as cofactor.

Necessary for normal cell division and for the maintenance of normal septation. The polypeptide is Probable GTP-binding protein EngB (Chlorobium phaeobacteroides (strain DSM 266 / SMG 266 / 2430)).